A 212-amino-acid chain; its full sequence is Large ribosomal subunit protein uL4 (212 aa).

Residues 43-52 (NNRQGTASTK) are compositionally biased toward polar residues. Positions 43 to 77 (NNRQGTASTKTRSEVRGGGRKPWRQKGTGRARAGS) are disordered. Residues 60 to 71 (GGRKPWRQKGTG) are compositionally biased toward basic residues.

It belongs to the universal ribosomal protein uL4 family. In terms of assembly, part of the 50S ribosomal subunit.

Its function is as follows. One of the primary rRNA binding proteins, this protein initially binds near the 5'-end of the 23S rRNA. It is important during the early stages of 50S assembly. It makes multiple contacts with different domains of the 23S rRNA in the assembled 50S subunit and ribosome. In terms of biological role, forms part of the polypeptide exit tunnel. In Trichodesmium erythraeum (strain IMS101), this protein is Large ribosomal subunit protein uL4.